A 160-amino-acid chain; its full sequence is Sodium/proline symporter (160 aa).

Helical transmembrane passes span 6–26 (PMLV…FIAW) and 68–88 (IFIS…GAWI).

Belongs to the sodium:solute symporter (SSF) (TC 2.A.21) family.

The protein resides in the cell inner membrane. It carries out the reaction L-proline(in) + Na(+)(in) = L-proline(out) + Na(+)(out). Functionally, catalyzes the sodium-dependent uptake of extracellular L-proline. The chain is Sodium/proline symporter from Klebsiella oxytoca.